A 363-amino-acid chain; its full sequence is Biotin synthase (363 aa).

Phosphoserine occurs at positions 13, 14, and 17. Residues 54–276 (KKVQQCTLLS…IATARICMPK (223 aa)) form the Radical SAM core domain. Residues Cys-69, Cys-73, and Cys-76 each contribute to the [4Fe-4S] cluster site. [2Fe-2S] cluster-binding residues include Cys-113, Cys-146, Cys-206, and Arg-280. The interval 337-363 (EYGTSTEGEDGTFTLPPKERLAPSPSL) is disordered.

It belongs to the radical SAM superfamily. Biotin synthase family. [4Fe-4S] cluster serves as cofactor. The cofactor is [2Fe-2S] cluster.

It carries out the reaction (4R,5S)-dethiobiotin + (sulfur carrier)-SH + 2 reduced [2Fe-2S]-[ferredoxin] + 2 S-adenosyl-L-methionine = (sulfur carrier)-H + biotin + 2 5'-deoxyadenosine + 2 L-methionine + 2 oxidized [2Fe-2S]-[ferredoxin]. It functions in the pathway cofactor biosynthesis; biotin biosynthesis; biotin from 7,8-diaminononanoate: step 2/2. Functionally, catalyzes the last step of biotin biosynthesis, the conversion of dethiobiotin to biotin. In Schizosaccharomyces pombe (strain 972 / ATCC 24843) (Fission yeast), this protein is Biotin synthase (bio2).